Here is an 852-residue protein sequence, read N- to C-terminus: Genome polyprotein (852 aa).

2 consecutive short sequence motifs ((L)YPX(n)L motif) follow at residues 167–171 and 200–205; these read YPHGL and YPVWEL. Residues 766–836 form an involved in P1-2A pentamerization region; sequence MMSRIAAGDL…PRKMKGLFSQ (71 aa).

This sequence belongs to the picornaviridae polyprotein family. As to quaternary structure, homodimer. Homomultimer; probably interacts with membranes in a multimeric form. Seems to assemble into amyloid-like fibers. Homopentamer. Homooligomer. In terms of assembly, interacts with capsid protein VP2. Interacts with capsid protein VP3. As to quaternary structure, interacts with capsid protein VP1. Interacts with capsid protein VP3. Interacts with capsid protein VP1. Interacts with capsid protein VP2. Post-translationally, specific enzymatic cleavages by viral protease in vivo yield a variety of precursors and mature proteins. Polyprotein processing intermediates are produced, such as P1-2A which is a functional precursor of the structural proteins, VP0 which is a VP4-VP2 precursor, VP1-2A precursor, 3ABC precursor which is a stable and catalytically active precursor of 3A, 3B and 3C proteins, 3AB and 3CD precursors. The assembly signal 2A is removed from VP1-2A by a host protease, possibly host Cathepsin L. This cleavage occurs over a region of 3 amino-acids probably generating VP1 proteins with heterogeneous C-termini. During virion maturation, immature virions are rendered infectious following cleavage of VP0 into VP4 and VP2. This maturation seems to be an autocatalytic event triggered by the presence of RNA in the capsid and is followed by a conformational change of the particle. In terms of processing, the assembly signal 2A is removed from VP1-2A by a host protease, possibly host Cathepsin L in naked virions. This cleavage does not occur in enveloped virions. This cleavage occurs over a region of 3 amino-acids probably generating VP1 proteins with heterogeneous C-termini. Post-translationally, viral protein genome-linked: VPg is uridylylated prior to priming replication into VPg-pUpU. Unlike other picornaviruses, does not seem to be myristoylated.

The protein resides in the virion. It is found in the host endosome. It localises to the host multivesicular body. The protein localises to the host membrane. Capsid proteins VP1, VP2, and VP3 form a closed capsid enclosing the viral positive strand RNA genome. All these proteins contain a beta-sheet structure called beta-barrel jelly roll. Together they form an icosahedral capsid (T=3) composed of 60 copies of each VP1, VP2, and VP3, with a diameter of approximately 300 Angstroms. VP1 is situated at the 12 fivefold axes, whereas VP2 and VP3 are located at the quasi-sixfold axes. The naked capsid interacts with the host receptor HAVCR1 to provide virion attachment to and probably entry into the target cell. In terms of biological role, VP0 precursor is a component of the immature procapsids. Its function is as follows. Plays a role in the assembly of the 12 pentamers into an icosahedral structure. Has not been detected in mature virions, supposedly owing to its small size. Functionally, precursor component of immature procapsids that corresponds to an extended form of the structural protein VP1. After maturation, possibly by the host Cathepsin L, the assembly signal 2A is cleaved to give rise to the mature VP1 protein. Affects membrane integrity and causes an increase in membrane permeability. In terms of biological role, functions as a viroporin. Affects membrane integrity and causes an increase in membrane permeability. Involved in host intracellular membrane rearrangements probably to give rise to the viral factories. Does not disrupt calcium homeostasis or glycoprotein trafficking. Antagonizes the innate immune response of the host by suppressing IFN-beta synthesis, which it achieves by interfering with the RIG-I/IFIH1 pathway. This Cercopithecus hamlyni (Owl-faced monkey) protein is Genome polyprotein.